The chain runs to 409 residues: Tryptophan synthase beta chain (409 aa).

An N6-(pyridoxal phosphate)lysine modification is found at Lys-92.

This sequence belongs to the TrpB family. Tetramer of two alpha and two beta chains. Requires pyridoxal 5'-phosphate as cofactor.

It catalyses the reaction (1S,2R)-1-C-(indol-3-yl)glycerol 3-phosphate + L-serine = D-glyceraldehyde 3-phosphate + L-tryptophan + H2O. It functions in the pathway amino-acid biosynthesis; L-tryptophan biosynthesis; L-tryptophan from chorismate: step 5/5. Functionally, the beta subunit is responsible for the synthesis of L-tryptophan from indole and L-serine. The chain is Tryptophan synthase beta chain (trpB) from Methanococcus voltae.